The sequence spans 216 residues: Pyrophosphatase PpaX (216 aa).

Asp9 (nucleophile) is an active-site residue.

The protein belongs to the HAD-like hydrolase superfamily. PpaX family. It depends on Mg(2+) as a cofactor.

The catalysed reaction is diphosphate + H2O = 2 phosphate + H(+). Functionally, hydrolyzes pyrophosphate formed during P-Ser-HPr dephosphorylation by HPrK/P. Might play a role in controlling the intracellular pyrophosphate pool. In Bacillus thuringiensis (strain Al Hakam), this protein is Pyrophosphatase PpaX.